A 126-amino-acid chain; its full sequence is Glycine cleavage system H protein (126 aa).

One can recognise a Lipoyl-binding domain in the interval 22 to 104; that stretch reads VATIGITEYA…YEKAWMVKIE (83 aa). Residue lysine 63 is modified to N6-lipoyllysine.

The protein belongs to the GcvH family. The glycine cleavage system is composed of four proteins: P, T, L and H. It depends on (R)-lipoate as a cofactor.

Its function is as follows. The glycine cleavage system catalyzes the degradation of glycine. The H protein shuttles the methylamine group of glycine from the P protein to the T protein. Functionally, is also involved in protein lipoylation via its role as an octanoyl/lipoyl carrier protein intermediate. This is Glycine cleavage system H protein from Staphylococcus epidermidis (strain ATCC 35984 / DSM 28319 / BCRC 17069 / CCUG 31568 / BM 3577 / RP62A).